We begin with the raw amino-acid sequence, 248 residues long: mRNA-decapping protein OPG122 (248 aa).

Positions 45–227 constitute a Nudix hydrolase domain; the sequence is HKRVSVSAIL…IAKYALDTAK (183 aa). A Nudix box motif is present at residues 126–147; sequence GIPKRGENVPECLSREIKEEVN. A Mg(2+)-binding site is contributed by glutamate 132. Glutamate 141 (nucleophile) is an active-site residue. Glutamate 145 contributes to the Mn(2+) binding site. A Mg(2+)-binding site is contributed by aspartate 167.

The protein belongs to the Nudix hydrolase family. The cofactor is Mg(2+). Mn(2+) serves as cofactor.

The protein resides in the host mitochondrion. Decapping enzyme that remove the protective 5'-cap from both host and viral mRNAs to commit transcripts for decay by the cellular exonuclease XRN1. Preferentially targets spliced mRNAs and since all viral genes are intronless, it preferentially targets host over viral transcripts. Acceleration of the turnover of cellular transcripts promotes the shutoff of host protein synthesis and therefore diminish the magnitude of antiviral response. The chain is mRNA-decapping protein OPG122 (OPG122) from Bos taurus (Bovine).